The sequence spans 511 residues: Glucans biosynthesis protein G (511 aa).

Positions 1–22 (MMKMRWLSAAVMLTLYTSSSWA) are cleaved as a signal peptide.

It belongs to the OpgD/OpgG family.

The protein localises to the periplasm. The protein operates within glycan metabolism; osmoregulated periplasmic glucan (OPG) biosynthesis. Involved in the biosynthesis of osmoregulated periplasmic glucans (OPGs). This chain is Glucans biosynthesis protein G, found in Shigella dysenteriae serotype 1 (strain Sd197).